A 105-amino-acid polypeptide reads, in one-letter code: Pyrimidine/purine nucleoside phosphorylase (105 aa).

The protein belongs to the nucleoside phosphorylase PpnP family.

It carries out the reaction a purine D-ribonucleoside + phosphate = a purine nucleobase + alpha-D-ribose 1-phosphate. The catalysed reaction is adenosine + phosphate = alpha-D-ribose 1-phosphate + adenine. It catalyses the reaction cytidine + phosphate = cytosine + alpha-D-ribose 1-phosphate. The enzyme catalyses guanosine + phosphate = alpha-D-ribose 1-phosphate + guanine. It carries out the reaction inosine + phosphate = alpha-D-ribose 1-phosphate + hypoxanthine. The catalysed reaction is thymidine + phosphate = 2-deoxy-alpha-D-ribose 1-phosphate + thymine. It catalyses the reaction uridine + phosphate = alpha-D-ribose 1-phosphate + uracil. The enzyme catalyses xanthosine + phosphate = alpha-D-ribose 1-phosphate + xanthine. In terms of biological role, catalyzes the phosphorolysis of diverse nucleosides, yielding D-ribose 1-phosphate and the respective free bases. Can use uridine, adenosine, guanosine, cytidine, thymidine, inosine and xanthosine as substrates. Also catalyzes the reverse reactions. The polypeptide is Pyrimidine/purine nucleoside phosphorylase (Albidiferax ferrireducens (strain ATCC BAA-621 / DSM 15236 / T118) (Rhodoferax ferrireducens)).